A 383-amino-acid chain; its full sequence is Acetylornithine deacetylase (383 aa).

His-80 lines the Zn(2+) pocket. The active site involves Asp-82. Position 112 (Asp-112) interacts with Zn(2+). Residue Glu-144 is part of the active site. Glu-145, Glu-169, and His-355 together coordinate Zn(2+).

The protein belongs to the peptidase M20A family. ArgE subfamily. As to quaternary structure, homodimer. The cofactor is Zn(2+). Co(2+) is required as a cofactor. It depends on glutathione as a cofactor.

Its subcellular location is the cytoplasm. The enzyme catalyses N(2)-acetyl-L-ornithine + H2O = L-ornithine + acetate. It functions in the pathway amino-acid biosynthesis; L-arginine biosynthesis; L-ornithine from N(2)-acetyl-L-ornithine (linear): step 1/1. Catalyzes the hydrolysis of the amide bond of N(2)-acetylated L-amino acids. Cleaves the acetyl group from N-acetyl-L-ornithine to form L-ornithine, an intermediate in L-arginine biosynthesis pathway, and a branchpoint in the synthesis of polyamines. This chain is Acetylornithine deacetylase, found in Pectobacterium atrosepticum (strain SCRI 1043 / ATCC BAA-672) (Erwinia carotovora subsp. atroseptica).